The primary structure comprises 276 residues: Protease HtpX homolog (276 aa).

Residues 16–36 (LFIWFGGMIAGQTGMVIAFLV) form a helical membrane-spanning segment. Residue His130 coordinates Zn(2+). Glu131 is a catalytic residue. Position 134 (His134) interacts with Zn(2+). The next 2 membrane-spanning stretches (helical) occupy residues 142–162 (IGTVAATIAGAIAMLANFGMF) and 173–193 (IFVMLALMFIMPMAASIIQMT). Glu199 contributes to the Zn(2+) binding site.

It belongs to the peptidase M48B family. Requires Zn(2+) as cofactor.

Its subcellular location is the cell inner membrane. The polypeptide is Protease HtpX homolog (Sulfurovum sp. (strain NBC37-1)).